The following is a 386-amino-acid chain: FHA domain-containing protein At4g14490 (386 aa).

The region spanning 28-78 (IRVGRIVRGNEIAIKDAGISTKHLRIESDSGNWVIQDLGSSNGTLLNSNAL) is the FHA domain. The interval 286-311 (KNKGKNKKADQKPLKSFENDEVTDSG) is disordered. Residues 292–303 (KKADQKPLKSFE) show a composition bias toward basic and acidic residues.

The protein is FHA domain-containing protein At4g14490 of Arabidopsis thaliana (Mouse-ear cress).